A 446-amino-acid polypeptide reads, in one-letter code: White-opaque regulator 2 (446 aa).

Over residues 1–24 the composition is skewed to polar residues; that stretch reads MTQLPSVSELINRTGSIGSSSNIT. Positions 1 to 203 are disordered; the sequence is MTQLPSVSEL…QPNFPYHNNF (203 aa). Positions 30–64 are enriched in low complexity; it reads TTTSATNTTTAATATTVTSTTPRSENSYSPNSPYS. A compositionally biased stretch (polar residues) spans 67-86; the sequence is TRPSNTSLTNYSAGSGITVA. Composition is skewed to low complexity over residues 87-97 and 104-120; these read SSSFQFSQPSP and STSS…QHQS. Residues 121–144 show a composition bias toward polar residues; the sequence is NPSGVSMSSNTSPRTSIVQSMSSV. Pro residues predominate over residues 166–184; that stretch reads VQPPPQQQQLQQPPPPPPQ. Positions 185-195 are enriched in low complexity; it reads QQQHIYPQQQP. A DNA-binding region (zn(2)-C6 fungal-type) is located at residues 305–332; it reads CLTCRKRRIKCDERKPTCFNCERSKKSC. Positions 336-402 are disordered; sequence QDLSKLPPRK…SGSSTNSRNL (67 aa). The segment covering 358–369 has biased composition (low complexity); sequence NQQQQQQQQNQQ. Positions 387–401 are enriched in polar residues; sequence HQITSISGSSTNSRN.

It localises to the nucleus. In terms of biological role, transcriptional regulator of the switch between 2 heritable states, the white and opaque states. These 2 cell types differ in many characteristics, including cell structure, mating competence, and virulence. Each state is heritable for many generations, and switching between states occurs stochastically, at low frequency. WOR2 is necessary for the stability of the opaque state phenotypic switching from the white to the opaque phase is a necessary step for mating. Plays a role in cell adhesion and pseudohyphal growth. This is White-opaque regulator 2 (WOR2) from Candida albicans (strain SC5314 / ATCC MYA-2876) (Yeast).